The primary structure comprises 310 residues: Transcriptional regulator NRG1 (310 aa).

The tract at residues 85-131 is disordered; that stretch reads YYMGPPAQHRLPTPPPYPMSSPTTATAATPLSQQSPHLQPQQTLQQP. Over residues 104 to 131 the composition is skewed to low complexity; that stretch reads SSPTTATAATPLSQQSPHLQPQQTLQQP. C2H2-type zinc fingers lie at residues 228–250 and 256–280; these read HVCKVCSRSFTTSGHLARHNRIH and HQCPWPTCEARFARQDNCNQHYKTH.

It localises to the nucleus. Its function is as follows. Transcriptional repressor that binds NRG1 response elements (NRE) of target promoters. Involved in regulation of chlamydospore formation, hyphal growth, virulence, and stress response. Plays a key role in regulating true hyphal growth, but does not regulate pseudohyphal growth in the same fashion. Directs transcriptional repression of a subset of filament-specific genes such as HWP1, HYR1, ALS8, HWP1, or ECE1; via the TUP1 pathway. Functions with UME6 in a negative feedback loop to control the level and duration of filament-specific gene expression in response to inducing conditions. Plays a key role in biofilm formation and dispersion. Also plays the role of a negative regulator of virulence in mice models. Required for the expression of the cell wall genes RBR1. The sequence is that of Transcriptional regulator NRG1 (NRG1) from Candida albicans (strain SC5314 / ATCC MYA-2876) (Yeast).